The chain runs to 50 residues: MSKRKMGPKQQKNPELPKSPEQPYGEPLSGSKKEKKANHSGQKHNPHHGL.

The interval 1-50 is disordered; that stretch reads MSKRKMGPKQQKNPELPKSPEQPYGEPLSGSKKEKKANHSGQKHNPHHGL. The segment covering 33 to 50 has biased composition (basic residues); the sequence is KEKKANHSGQKHNPHHGL.

This sequence belongs to the SspP family.

The protein resides in the spore core. The protein is Small, acid-soluble spore protein P of Oceanobacillus iheyensis (strain DSM 14371 / CIP 107618 / JCM 11309 / KCTC 3954 / HTE831).